The sequence spans 118 residues: uncharacterized protein (118 aa).

A run of 2 helical transmembrane segments spans residues 5-25 (AFFN…SMVI) and 40-57 (FLTF…QHYI).

It localises to the membrane. This is an uncharacterized protein from African swine fever virus (strain Badajoz 1971 Vero-adapted) (Ba71V).